A 137-amino-acid chain; its full sequence is NADH-quinone oxidoreductase subunit A 2 (137 aa).

3 helical membrane passes run 12–32 (WGFAAFLLGVVGLLAFMLGVS), 66–86 (FYLVAMLFVIFDVEALFLFAW), and 95–115 (WAGLIEATIFIAILLAGLVYL).

Belongs to the complex I subunit 3 family. As to quaternary structure, NDH-1 is composed of 13 different subunits. Subunits NuoA, H, J, K, L, M, N constitute the membrane sector of the complex.

The protein localises to the cell inner membrane. The enzyme catalyses a quinone + NADH + 5 H(+)(in) = a quinol + NAD(+) + 4 H(+)(out). Functionally, NDH-1 shuttles electrons from NADH, via FMN and iron-sulfur (Fe-S) centers, to quinones in the respiratory chain. The immediate electron acceptor for the enzyme in this species is believed to be ubiquinone. Couples the redox reaction to proton translocation (for every two electrons transferred, four hydrogen ions are translocated across the cytoplasmic membrane), and thus conserves the redox energy in a proton gradient. In Pseudomonas aeruginosa (strain ATCC 15692 / DSM 22644 / CIP 104116 / JCM 14847 / LMG 12228 / 1C / PRS 101 / PAO1), this protein is NADH-quinone oxidoreductase subunit A 2.